The primary structure comprises 472 residues: Relaxin-3 receptor 1 (472 aa).

The Extracellular portion of the chain corresponds to 1-81 (MQVASATPAA…ESTDTEARVR (81 aa)). Residues Asn-36 and Asn-40 are each glycosylated (N-linked (GlcNAc...) asparagine). A helical transmembrane segment spans residues 82–102 (ILISAVYWVVCALGLAGNLLV). At 103–119 (LYLMKSKQGWRKSSINL) the chain is on the cytoplasmic side. A helical transmembrane segment spans residues 120–140 (FVTNLALTDFQFVLTLPFWAV). The Extracellular portion of the chain corresponds to 141 to 156 (ENALDFKWPFGKAMCK). Cys-155 and Cys-247 are joined by a disulfide. The helical transmembrane segment at 157 to 177 (IVSMVTSMNMYASVFFLTAMS) threads the bilayer. Over 178–215 (VARYHSVASALKSHRTRGRGRGDCCGQSLRESCCFSAK) the chain is Cytoplasmic. A helical transmembrane segment spans residues 216 to 236 (VLCGLIWASAALASLPNAIFS). The Extracellular segment spans residues 237-270 (TTIRVLGEELCLMHFPDKLLGWDRQFWLGLYHLQ). A helical membrane pass occupies residues 271–291 (KVLLGFLLPLSIISLCYLLLV). At 292-298 (RFISDRR) the chain is on the cytoplasmic side. Residues 299-319 (VVGTTDAVGAAAAPGGGLSTA) traverse the membrane as a helical segment. Residues 320–332 (SARRRSKVTKSVT) lie on the Extracellular side of the membrane. The chain crosses the membrane as a helical span at residues 333-353 (IVVLSFFLCWLPNQALTTWSI). Over 354-472 (LIKFNAVPFS…YDLLPSSSAY (119 aa)) the chain is Cytoplasmic.

It belongs to the G-protein coupled receptor 1 family.

Its subcellular location is the cell membrane. In terms of biological role, receptor for RNL3/relaxin-3. Binding of the ligand inhibit cAMP accumulation. This Mus musculus (Mouse) protein is Relaxin-3 receptor 1 (Rxfp3).